We begin with the raw amino-acid sequence, 318 residues long: Dihydroorotate dehydrogenase B (NAD(+)), catalytic subunit (318 aa).

FMN contacts are provided by residues serine 19 and 43-44; that span reads KT. Residues lysine 43, 69 to 73, and asparagine 125 each bind substrate; that span reads NAMGL. FMN is bound at residue asparagine 125. Cysteine 128 serves as the catalytic Nucleophile. The FMN site is built by lysine 164 and valine 192. 193–194 is a binding site for substrate; sequence NT. FMN is bound by residues glycine 219, 247-248, and 269-270; these read GG and AT.

It belongs to the dihydroorotate dehydrogenase family. Type 1 subfamily. Heterotetramer of 2 PyrK and 2 PyrD type B subunits. The cofactor is FMN.

It is found in the cytoplasm. It carries out the reaction (S)-dihydroorotate + NAD(+) = orotate + NADH + H(+). It participates in pyrimidine metabolism; UMP biosynthesis via de novo pathway; orotate from (S)-dihydroorotate (NAD(+) route): step 1/1. Catalyzes the conversion of dihydroorotate to orotate with NAD(+) as electron acceptor. The protein is Dihydroorotate dehydrogenase B (NAD(+)), catalytic subunit (pyrD) of Methanopyrus kandleri (strain AV19 / DSM 6324 / JCM 9639 / NBRC 100938).